The primary structure comprises 53 residues: UPF0181 protein VC_A0569 (53 aa).

This sequence belongs to the UPF0181 family.

This chain is UPF0181 protein VC_A0569, found in Vibrio cholerae serotype O1 (strain ATCC 39315 / El Tor Inaba N16961).